A 520-amino-acid chain; its full sequence is Sensory neuron membrane protein 2 (520 aa).

Over 1 to 7 the chain is Cytoplasmic; that stretch reads MLGKHSK. A helical transmembrane segment spans residues 8 to 28; that stretch reads IFFGVSLIFLVIAIVLASWGF. Residues 29-468 lie on the Extracellular side of the membrane; the sequence is QKIVNKQIQK…DSHKLLGYVE (440 aa). 7 N-linked (GlcNAc...) asparagine glycosylation sites follow: Asn44, Asn67, Asn104, Asn228, Asn271, Asn313, and Asn342. 3 disulfide bridges follow: Cys267–Cys337, Cys298–Cys361, and Cys339–Cys350. A helical transmembrane segment spans residues 469–489; it reads VAKWFLLTIAIISVIASAVAV. Over 490-520 the chain is Cytoplasmic; sequence ARANALLSWPRNSNSVSFILGPSVTQVNKGN.

Belongs to the CD36 family. In terms of tissue distribution, localizes to cells surrounding the sensory neurons in the antenna. Associate in a ratio of 2:1 with the neurons expressing the other subtype SNMP1.

The protein localises to the cell membrane. Its function is as follows. Plays an olfactory role that is not restricted to pheromone sensitivity. May play a role in the elimination of lipophilic components from the sensillum lymph. This Heliothis virescens (Tobacco budworm moth) protein is Sensory neuron membrane protein 2.